Consider the following 476-residue polypeptide: Probable cytosolic Fe-S cluster assembly factor GH10760 (476 aa).

The [4Fe-4S] cluster site is built by Cys23, Cys68, Cys71, Cys74, Cys187, Cys243, Cys395, and Cys399.

This sequence belongs to the NARF family.

Component of the cytosolic iron-sulfur (Fe/S) protein assembly machinery. Required for maturation of extramitochondrial Fe/S proteins. The polypeptide is Probable cytosolic Fe-S cluster assembly factor GH10760 (Drosophila grimshawi (Hawaiian fruit fly)).